Consider the following 299-residue polypeptide: pH-regulated antigen PRA1 (299 aa).

A signal peptide spans 1–15; that stretch reads MNYLLFCLFFAFSVA. 4 N-linked (GlcNAc...) asparagine glycosylation sites follow: Asn-48, Asn-89, Asn-135, and Asn-208. A disordered region spans residues 253-299; the sequence is FEDSDSGSDSGASSTASSSHQHTDSNPSATTDANSHCHTHADGEVHC. A compositionally biased stretch (low complexity) spans 259 to 272; that stretch reads GSDSGASSTASSSH. The segment covering 278–288 has biased composition (polar residues); it reads NPSATTDANSH.

It belongs to the ZPS1 family. Component of a multiprotein complex of 250 kDa composed of at least HYR1, MP65, and PRA1. Interacts with host Integrin alpha-M/beta-2 heterodimer. Also binds human factor H (CFH), CFHR1, plasminogen (PLG), complement C3, and C4BPA. Interacts with ZRT101. Post-translationally, N- and O-glycosylated. The N- and 0-glycosidically linked carbohydrates represent 18 to 20 percent and 3 to 4 percent, respectively, of the molecular mass of PRA1. 0-linked sugar residues may be involved in the interaction with fibrinogen. Contributes highly to the carbohydrate component of the matrix. Treatment with tunicamycin impairs glycosylation.

The protein resides in the secreted. Functionally, cell surface protein involved in the host-parasite interaction during candidal infection. With MP65, represents a major component of the biofilm matrix. As a surface protein, binds the two human complement regulators CFH and CFHR1, as well as plasminogen PLG, mediates complement evasion and extra-cellular matrix interaction and/or degradation. As a released protein, enhances complement control in direct vicinity of the yeast and thus generates an additional protective layer which controls host complement attack, assisting the fungus in escaping host surveillance. Binds to host fluid-phase C3 and blocks cleavage of C3 to C3a and C3b, leading to inhibition of complement activation and protection from uptake of C.albicans by human macrophages. Also mediates human complement control and complement evasion through binding to C4BPA, another human complement inhibitor, as well as through binding to host integrin alpha-M/beta-2. Binds zinc from its environment and then reassociates with ZRT1 to acquire this essential metal. This is pH-regulated antigen PRA1 from Candida albicans (strain SC5314 / ATCC MYA-2876) (Yeast).